A 519-amino-acid chain; its full sequence is Chaperone SurA (519 aa).

An N-terminal signal peptide occupies residues 1–31; the sequence is MMRSLHSLRRMSGTVLALMLAAGLPLSAAQA. Composition is skewed to low complexity over residues 31-45 and 197-207; these read AQPA…QKPA and PAAAQATRAPA. Disordered regions lie at residues 31 to 50 and 196 to 221; these read AQPA…PAPS and NPAA…PAQS. The PpiC 1 domain maps to 223–324; it reads PAMLVLAQIL…NGFHILKVVD (102 aa). Residues 328–361 are disordered; it reads GGQPAQAARPAPAPAPQQPSSFQEGPSVAAPQGP. In terms of domain architecture, PpiC 2 spans 364–463; that stretch reads VTQTHARHIL…FGWHLIQVLE (100 aa).

It localises to the periplasm. The catalysed reaction is [protein]-peptidylproline (omega=180) = [protein]-peptidylproline (omega=0). Functionally, chaperone involved in the correct folding and assembly of outer membrane proteins. Recognizes specific patterns of aromatic residues and the orientation of their side chains, which are found more frequently in integral outer membrane proteins. May act in both early periplasmic and late outer membrane-associated steps of protein maturation. This chain is Chaperone SurA, found in Bordetella parapertussis (strain 12822 / ATCC BAA-587 / NCTC 13253).